Here is a 195-residue protein sequence, read N- to C-terminus: GTP cyclohydrolase 1 (195 aa).

Positions 85, 88, and 157 each coordinate Zn(2+).

This sequence belongs to the GTP cyclohydrolase I family. In terms of assembly, toroid-shaped homodecamer, composed of two pentamers of five dimers.

The enzyme catalyses GTP + H2O = 7,8-dihydroneopterin 3'-triphosphate + formate + H(+). It participates in cofactor biosynthesis; 7,8-dihydroneopterin triphosphate biosynthesis; 7,8-dihydroneopterin triphosphate from GTP: step 1/1. This is GTP cyclohydrolase 1 from Clostridium acetobutylicum (strain ATCC 824 / DSM 792 / JCM 1419 / IAM 19013 / LMG 5710 / NBRC 13948 / NRRL B-527 / VKM B-1787 / 2291 / W).